The following is a 279-amino-acid chain: Secreted RxLR effector protein 90 (279 aa).

A signal peptide spans 1 to 19; that stretch reads MKSAAAFATFLTLSVFVAT. A RxLR-dEER motif is present at residues 29–46; the sequence is RGLRSLADNQSTESSEGR. Disordered regions lie at residues 29–53 and 135–176; these read RGLRSLADNQSTESSEGRKDHYNHH and ATPA…NLAG. The N-linked (GlcNAc...) asparagine glycan is linked to asparagine 37. The segment covering 135–146 has biased composition (low complexity); the sequence is ATPAPTTSVPSS. Residues 147-163 show a composition bias toward polar residues; that stretch reads LVNTDTSDNQLPTTPVA. Over residues 166-176 the composition is skewed to gly residues; it reads QGGGIGSNLAG. Asparagine 217 carries N-linked (GlcNAc...) asparagine glycosylation.

Belongs to the RxLR effector family.

It is found in the secreted. Its subcellular location is the host cell membrane. In terms of biological role, secreted effector that completely suppresses the host cell death induced by cell death-inducing proteins. The sequence is that of Secreted RxLR effector protein 90 from Plasmopara viticola (Downy mildew of grapevine).